The sequence spans 186 residues: Ribosome-recycling factor (186 aa).

The protein belongs to the RRF family.

It localises to the cytoplasm. In terms of biological role, responsible for the release of ribosomes from messenger RNA at the termination of protein biosynthesis. May increase the efficiency of translation by recycling ribosomes from one round of translation to another. The protein is Ribosome-recycling factor of Rickettsia peacockii (strain Rustic).